A 471-amino-acid polypeptide reads, in one-letter code: Ribosome biogenesis protein YTM1 (471 aa).

The interval 10–92 is ubiquitin-like (UBL) domain; sequence VTARFTTRDE…ETRLEVEYTR (83 aa). 3 WD repeats span residues 119 to 158, 165 to 203, and 210 to 249; these read SRAG…LATS, GRIT…RTIT, and SHRW…NPVA. Positions 245 to 274 are disordered; that stretch reads ENPVAPSSLLPNSTAASNKRQKLSKPDRTV. Polar residues predominate over residues 253-262; sequence LLPNSTAASN. WD repeat units lie at residues 285 to 325, 327 to 366, 372 to 412, and 436 to 471; these read GHSS…CVDT, TTGH…TQIS, GHKN…TGGQ, and GHGE…ALGS. Residues 412–440 form a disordered region; that stretch reads QVGEGQQGESVHTIHRQGQSGPGKGHGEG.

Belongs to the WD repeat WDR12/YTM1 family. In terms of assembly, component of the NOP7 complex, composed of ERB1, NOP7 and YTM1. The complex is held together by ERB1, which interacts with NOP7 via its N-terminal domain and with YTM1 via a high-affinity interaction between the seven-bladed beta-propeller domains of the 2 proteins. The NOP7 complex associates with the 66S pre-ribosome. Interacts (via UBL domain) with MDN1 (via VWFA/MIDAS domain).

Its subcellular location is the nucleus. It localises to the nucleolus. The protein resides in the nucleoplasm. In terms of biological role, component of the NOP7 complex, which is required for maturation of the 25S and 5.8S ribosomal RNAs and formation of the 60S ribosome. In Phaeosphaeria nodorum (strain SN15 / ATCC MYA-4574 / FGSC 10173) (Glume blotch fungus), this protein is Ribosome biogenesis protein YTM1.